We begin with the raw amino-acid sequence, 836 residues long: DNA gyrase subunit A (836 aa).

The region spanning 46-510 (LPDARDGLKP…ISEEIDDESL (465 aa)) is the Topo IIA-type catalytic domain. Residue Y134 is the O-(5'-phospho-DNA)-tyrosine intermediate of the active site. The short motif at 537–543 (QHRGGVG) is the GyrA-box element.

This sequence belongs to the type II topoisomerase GyrA/ParC subunit family. As to quaternary structure, heterotetramer, composed of two GyrA and two GyrB chains. In the heterotetramer, GyrA contains the active site tyrosine that forms a transient covalent intermediate with DNA, while GyrB binds cofactors and catalyzes ATP hydrolysis.

It localises to the cytoplasm. It catalyses the reaction ATP-dependent breakage, passage and rejoining of double-stranded DNA.. Functionally, a type II topoisomerase that negatively supercoils closed circular double-stranded (ds) DNA in an ATP-dependent manner to modulate DNA topology and maintain chromosomes in an underwound state. Negative supercoiling favors strand separation, and DNA replication, transcription, recombination and repair, all of which involve strand separation. Also able to catalyze the interconversion of other topological isomers of dsDNA rings, including catenanes and knotted rings. Type II topoisomerases break and join 2 DNA strands simultaneously in an ATP-dependent manner. The chain is DNA gyrase subunit A from Mycoplasma genitalium (strain ATCC 33530 / DSM 19775 / NCTC 10195 / G37) (Mycoplasmoides genitalium).